The chain runs to 299 residues: Protoheme IX farnesyltransferase (299 aa).

9 consecutive transmembrane segments (helical) span residues 17-37 (VVAL…PAPY), 41-61 (GLLV…AAVF), 91-111 (ALMW…LFVN), 113-133 (ITMV…TLYL), 141-161 (IVIG…AVSG), 168-188 (ACLL…ALAI), 207-227 (GLAY…LVSL), 228-248 (LPYL…ALGI), and 266-286 (IAWC…VTLL).

This sequence belongs to the UbiA prenyltransferase family. Protoheme IX farnesyltransferase subfamily.

Its subcellular location is the cell inner membrane. It catalyses the reaction heme b + (2E,6E)-farnesyl diphosphate + H2O = Fe(II)-heme o + diphosphate. It functions in the pathway porphyrin-containing compound metabolism; heme O biosynthesis; heme O from protoheme: step 1/1. Its function is as follows. Converts heme B (protoheme IX) to heme O by substitution of the vinyl group on carbon 2 of heme B porphyrin ring with a hydroxyethyl farnesyl side group. This is Protoheme IX farnesyltransferase from Ruthia magnifica subsp. Calyptogena magnifica.